Consider the following 83-residue polypeptide: Small ribosomal subunit protein uS17 (83 aa).

It belongs to the universal ribosomal protein uS17 family. As to quaternary structure, part of the 30S ribosomal subunit.

One of the primary rRNA binding proteins, it binds specifically to the 5'-end of 16S ribosomal RNA. This is Small ribosomal subunit protein uS17 from Chlamydia abortus (strain DSM 27085 / S26/3) (Chlamydophila abortus).